Consider the following 332-residue polypeptide: L-lactate dehydrogenase A chain (332 aa).

Residues 29-57 (GMVG…MEDK) and arginine 99 contribute to the NAD(+) site. Arginine 106, asparagine 138, and arginine 169 together coordinate substrate. Position 138 (asparagine 138) interacts with NAD(+). The active-site Proton acceptor is histidine 193. Residue threonine 248 coordinates substrate.

This sequence belongs to the LDH/MDH superfamily. LDH family. Homotetramer.

It is found in the cytoplasm. It catalyses the reaction (S)-lactate + NAD(+) = pyruvate + NADH + H(+). The protein operates within fermentation; pyruvate fermentation to lactate; (S)-lactate from pyruvate: step 1/1. Its function is as follows. Interconverts simultaneously and stereospecifically pyruvate and lactate with concomitant interconversion of NADH and NAD(+). In Rhinogobiops nicholsii (Blackeye goby), this protein is L-lactate dehydrogenase A chain (ldha).